The following is a 152-amino-acid chain: uncharacterized protein (152 aa).

This is an uncharacterized protein from Mycobacterium tuberculosis (strain ATCC 25618 / H37Rv).